The primary structure comprises 331 residues: DNA polymerase IV (331 aa).

Positions 1-174 constitute a UmuC domain; it reads FFAAVEMRDN…LPLAKIPGVG (174 aa). Mg(2+) is bound at residue D92. E93 is an active-site residue.

Belongs to the DNA polymerase type-Y family. As to quaternary structure, monomer. It depends on Mg(2+) as a cofactor.

The protein localises to the cytoplasm. It catalyses the reaction DNA(n) + a 2'-deoxyribonucleoside 5'-triphosphate = DNA(n+1) + diphosphate. Poorly processive, error-prone DNA polymerase involved in untargeted mutagenesis. Copies undamaged DNA at stalled replication forks, which arise in vivo from mismatched or misaligned primer ends. These misaligned primers can be extended by PolIV. Exhibits no 3'-5' exonuclease (proofreading) activity. May be involved in translesional synthesis, in conjunction with the beta clamp from PolIII. In Escherichia fergusonii, this protein is DNA polymerase IV.